The chain runs to 382 residues: Succinate--CoA ligase [ADP-forming] subunit beta (382 aa).

The ATP-grasp domain maps to 9–240 (KELFSKYGVK…PRDVTEFEAY (232 aa)). Residues Lys45, 52–54 (GRG), Val94, and Glu99 each bind ATP. Positions 193 and 207 each coordinate Mg(2+). Substrate is bound by residues Asn260 and 317–319 (GIT).

This sequence belongs to the succinate/malate CoA ligase beta subunit family. Heterotetramer of two alpha and two beta subunits. Mg(2+) serves as cofactor.

The enzyme catalyses succinate + ATP + CoA = succinyl-CoA + ADP + phosphate. It catalyses the reaction GTP + succinate + CoA = succinyl-CoA + GDP + phosphate. It functions in the pathway carbohydrate metabolism; tricarboxylic acid cycle; succinate from succinyl-CoA (ligase route): step 1/1. Succinyl-CoA synthetase functions in the citric acid cycle (TCA), coupling the hydrolysis of succinyl-CoA to the synthesis of either ATP or GTP and thus represents the only step of substrate-level phosphorylation in the TCA. The beta subunit provides nucleotide specificity of the enzyme and binds the substrate succinate, while the binding sites for coenzyme A and phosphate are found in the alpha subunit. The chain is Succinate--CoA ligase [ADP-forming] subunit beta from Pyrobaculum aerophilum (strain ATCC 51768 / DSM 7523 / JCM 9630 / CIP 104966 / NBRC 100827 / IM2).